A 411-amino-acid polypeptide reads, in one-letter code: Cytochrome P450 monooxygenase sirE (411 aa).

Residues Asn-12 and Asn-149 are each glycosylated (N-linked (GlcNAc...) asparagine). A helical membrane pass occupies residues 181 to 203 (FLNVISIFTVMMASLNVLYDILA). Asn-342 carries an N-linked (GlcNAc...) asparagine glycan. Cys-352 serves as a coordination point for heme.

It belongs to the cytochrome P450 family. Heme serves as cofactor.

The protein resides in the membrane. Its pathway is mycotoxin biosynthesis. Functionally, cytochrome P450 monooxygenase; part of the gene cluster that mediates the biosynthesis of sirodesmin PL, an epipolythiodioxopiperazine (ETP) characterized by a disulfide bridged cyclic dipeptide and that acts as a phytotoxin which is involved in the blackleg didease of canola. SirD catalyzes the O-prenylation of L-tyrosine (L-Tyr) in the presence of dimethylallyl diphosphate (DMAPP) to yield 4-O-dimethylallyl-L-Tyr, and therefore represents probably the first pathway-specific enzyme in the biosynthesis of sirodesmin PL. 4-O-dimethylallyl-L-Tyr, then undergoes condensation with L-Ser in a reaction catalyzed by the non-ribosomal peptide synthase sirP to form the diketopiperazine (DKP) backbone. Further bishydroxylation of the DKP performed by the cytochrome P450 monooxygenase sirC leads to the production of the intermediate phomamide. This step is essential to form the reactive thiol group required for toxicity of sirodesmin PL. The next steps of sirodesmin biosynthesis are not well understood yet, but some predictions could be made from intermediate compounds identification. Phomamide is converted into phomalizarine via oxidation, probably by sirT. Further oxidation, methylation (by sirM or sirN) and reduction steps convert phomalizarine to deacetyl sirodesmin. Finally, acetyltransferase sirH probably acetylates deacetyl sirodesmin to produce sirodesmin PL. This Leptosphaeria maculans (Blackleg fungus) protein is Cytochrome P450 monooxygenase sirE.